The chain runs to 389 residues: MLLALAQWLQGDASFLRLFTYLTFRAVMATITALVIGLVCGPWVIRKLTQMKVGQAVRKDGPQTHLVKSGTPTMGGVLILIGIAVATLLWGDLTNRFIWIVMLVTFGFGVIGWVDDYRKVVYKDPRGMSSREKYFWQSVIGLFAAVYLAFSVSEANNVRVFDLFMAWVRSGLSMGLPARADLMLPFLKSISYPLGVWGFIALTYFVIVGASNAVNLTDGLDGLVIMPVVLVGASLGVFAYVMGSAVYSKYLLFPHIPGAGELLIFCSAMGGAGLAFLWYNTHPAQVFMGDVGALALGGALGTVAVIVRQEIVLFIMGGIFVAETLSVMLQVTWFKYTKKRYGEGRRIFKMAPLHHHFELSGWKETQVVVRFWIITLMLCLFGLSTLKLR.

The next 10 membrane-spanning stretches (helical) occupy residues 25–45 (RAVMATITALVIGLVCGPWVI), 73–93 (TMGGVLILIGIAVATLLWGDL), 97–117 (FIWIVMLVTFGFGVIGWVDDY), 135–155 (FWQSVIGLFAAVYLAFSVSEA), 190–210 (ISYPLGVWGFIALTYFVIVGA), 222–242 (GLVIMPVVLVGASLGVFAYVM), 258–278 (GAGELLIFCSAMGGAGLAFLW), 286–306 (VFMGDVGALALGGALGTVAVI), 311–331 (IVLFIMGGIFVAETLSVMLQV), and 366–386 (QVVVRFWIITLMLCLFGLSTL).

The protein belongs to the glycosyltransferase 4 family. MraY subfamily. The cofactor is Mg(2+).

It is found in the cell inner membrane. It catalyses the reaction UDP-N-acetyl-alpha-D-muramoyl-L-alanyl-gamma-D-glutamyl-meso-2,6-diaminopimeloyl-D-alanyl-D-alanine + di-trans,octa-cis-undecaprenyl phosphate = di-trans,octa-cis-undecaprenyl diphospho-N-acetyl-alpha-D-muramoyl-L-alanyl-D-glutamyl-meso-2,6-diaminopimeloyl-D-alanyl-D-alanine + UMP. It functions in the pathway cell wall biogenesis; peptidoglycan biosynthesis. In terms of biological role, catalyzes the initial step of the lipid cycle reactions in the biosynthesis of the cell wall peptidoglycan: transfers peptidoglycan precursor phospho-MurNAc-pentapeptide from UDP-MurNAc-pentapeptide onto the lipid carrier undecaprenyl phosphate, yielding undecaprenyl-pyrophosphoryl-MurNAc-pentapeptide, known as lipid I. The protein is Phospho-N-acetylmuramoyl-pentapeptide-transferase of Burkholderia mallei (strain NCTC 10247).